Here is a 332-residue protein sequence, read N- to C-terminus: Nucleoid-associated protein VVA0877 (332 aa).

Belongs to the YejK family.

It is found in the cytoplasm. Its subcellular location is the nucleoid. The protein is Nucleoid-associated protein VVA0877 of Vibrio vulnificus (strain YJ016).